A 293-amino-acid polypeptide reads, in one-letter code: Proline iminopeptidase (293 aa).

The 250-residue stretch at 28 to 277 (PLVLLHGGPG…NCSHMSFVQK (250 aa)) folds into the AB hydrolase-1 domain. Residue S105 is the Nucleophile of the active site. D244 is an active-site residue. H271 functions as the Proton donor in the catalytic mechanism.

This sequence belongs to the peptidase S33 family.

The protein localises to the cell envelope. The catalysed reaction is Release of N-terminal proline from a peptide.. Functionally, releases the N-terminal proline from various substrates. The sequence is that of Proline iminopeptidase from Lactobacillus acidophilus (strain ATCC 700396 / NCK56 / N2 / NCFM).